We begin with the raw amino-acid sequence, 98 residues long: Integration host factor subunit alpha (98 aa).

Positions 49 to 71 are disordered; the sequence is FGNFDLRDKNQRPGRNPKTGEDI.

The protein belongs to the bacterial histone-like protein family. As to quaternary structure, heterodimer of an alpha and a beta chain.

This protein is one of the two subunits of integration host factor, a specific DNA-binding protein that functions in genetic recombination as well as in transcriptional and translational control. The chain is Integration host factor subunit alpha from Shewanella amazonensis (strain ATCC BAA-1098 / SB2B).